The primary structure comprises 595 residues: DNA mismatch repair protein MutL (595 aa).

The protein belongs to the DNA mismatch repair MutL/HexB family.

Functionally, this protein is involved in the repair of mismatches in DNA. It is required for dam-dependent methyl-directed DNA mismatch repair. May act as a 'molecular matchmaker', a protein that promotes the formation of a stable complex between two or more DNA-binding proteins in an ATP-dependent manner without itself being part of a final effector complex. This is DNA mismatch repair protein MutL from Rhodopseudomonas palustris (strain ATCC BAA-98 / CGA009).